Here is a 141-residue protein sequence, read N- to C-terminus: Putative pre-16S rRNA nuclease (141 aa).

The protein belongs to the YqgF nuclease family.

The protein localises to the cytoplasm. Its function is as follows. Could be a nuclease involved in processing of the 5'-end of pre-16S rRNA. In Cupriavidus taiwanensis (strain DSM 17343 / BCRC 17206 / CCUG 44338 / CIP 107171 / LMG 19424 / R1) (Ralstonia taiwanensis (strain LMG 19424)), this protein is Putative pre-16S rRNA nuclease.